We begin with the raw amino-acid sequence, 396 residues long: 1-deoxy-D-xylulose 5-phosphate reductoisomerase (396 aa).

Positions 17, 18, 19, 20, 47, and 130 each coordinate NADPH. 1-deoxy-D-xylulose 5-phosphate is bound at residue K131. E132 is an NADPH binding site. D156 lines the Mn(2+) pocket. 4 residues coordinate 1-deoxy-D-xylulose 5-phosphate: S157, E158, S182, and H205. Residue E158 participates in Mn(2+) binding. G211 serves as a coordination point for NADPH. The 1-deoxy-D-xylulose 5-phosphate site is built by S218, N223, K224, and E227. Residue E227 participates in Mn(2+) binding.

It belongs to the DXR family. Requires Mg(2+) as cofactor. It depends on Mn(2+) as a cofactor.

It carries out the reaction 2-C-methyl-D-erythritol 4-phosphate + NADP(+) = 1-deoxy-D-xylulose 5-phosphate + NADPH + H(+). It functions in the pathway isoprenoid biosynthesis; isopentenyl diphosphate biosynthesis via DXP pathway; isopentenyl diphosphate from 1-deoxy-D-xylulose 5-phosphate: step 1/6. In terms of biological role, catalyzes the NADPH-dependent rearrangement and reduction of 1-deoxy-D-xylulose-5-phosphate (DXP) to 2-C-methyl-D-erythritol 4-phosphate (MEP). The polypeptide is 1-deoxy-D-xylulose 5-phosphate reductoisomerase (Rhizobium etli (strain ATCC 51251 / DSM 11541 / JCM 21823 / NBRC 15573 / CFN 42)).